The primary structure comprises 198 residues: Na(+)-translocating NADH-quinone reductase subunit E (198 aa).

6 consecutive transmembrane segments (helical) span residues 11–31 (SIFI…FLAV), 39–59 (FGLG…NNLV), 77–97 (FLNF…LEMI), 110–130 (GIFL…SFMV), 140–160 (VVYG…LAGI), and 176–196 (LGIT…FSGV).

The protein belongs to the NqrDE/RnfAE family. As to quaternary structure, composed of six subunits; NqrA, NqrB, NqrC, NqrD, NqrE and NqrF.

It is found in the cell inner membrane. The enzyme catalyses a ubiquinone + n Na(+)(in) + NADH + H(+) = a ubiquinol + n Na(+)(out) + NAD(+). Functionally, NQR complex catalyzes the reduction of ubiquinone-1 to ubiquinol by two successive reactions, coupled with the transport of Na(+) ions from the cytoplasm to the periplasm. NqrA to NqrE are probably involved in the second step, the conversion of ubisemiquinone to ubiquinol. This is Na(+)-translocating NADH-quinone reductase subunit E from Vibrio vulnificus (strain CMCP6).